The following is an 830-amino-acid chain: Prolactin receptor (830 aa).

The first 23 residues, 1-23 (MKQKLRSSVQIILLFALTAVGLT), serve as a signal peptide directing secretion. Topologically, residues 24–439 (GQSYPGKPKI…QIPTDFRIKD (416 aa)) are extracellular. 4 consecutive Fibronectin type-III domains span residues 30-128 (KPKI…VQPD), 129-228 (APVN…IPNG), 231-331 (PPEK…IVQT), and 333-434 (PPVN…IPTD). The cysteines at positions 36 and 46 are disulfide-linked. The N-linked (GlcNAc...) asparagine glycan is linked to Asn-59. Cys-75 and Cys-86 are disulfide-bonded. Residues Asn-91, Asn-100, Asn-112, Asn-132, Asn-263, Asn-304, Asn-316, and Asn-336 are each glycosylated (N-linked (GlcNAc...) asparagine). Zn(2+) contacts are provided by Asp-415 and His-417. Residues 420 to 424 (WSEWS) carry the WSXWS motif motif. Residues 440–460 (MVVWIIVGVLSSLICLVMSWT) form a helical membrane-spanning segment. Topologically, residues 461 to 830 (MVLKGYRMIA…DPSSFIPAFK (370 aa)) are cytoplasmic. The Box 1 motif motif lies at 472–480 (ILPPVPGPK).

It belongs to the type I cytokine receptor family. Type 1 subfamily.

The protein resides in the membrane. This is a receptor for the anterior pituitary hormone prolactin. In Columba livia (Rock dove), this protein is Prolactin receptor (PRLR).